The sequence spans 357 residues: Cyclin-Y (357 aa).

Residues 1 to 13 (MGNSSCCLRTRSS) show a composition bias toward polar residues. A disordered region spans residues 1 to 23 (MGNSSCCLRTRSSSGEDKSYNND). In terms of domain architecture, Cyclin N-terminal spans 186-284 (PDHRNIYRFV…RFLECLDFNI (99 aa)).

This sequence belongs to the cyclin family. Interacts with pct-1; the interaction is required to activate pct-1.

The protein resides in the cytoplasm. Its subcellular location is the cell projection. It is found in the dendrite. It localises to the axon. Its function is as follows. In association with pct-1, regulates the trafficking of synaptic vesicle precursors in DA motor neurons by promoting anterograde trafficking to the axon and preventing dynein-dependent trafficking to the dendrite. May also regulate synaptic vesicle trafficking in DD motor neurons and in RIA interneurons. Involved in synapse formation during DD motor neuron remodeling by disassembling ventral presynaptic structures. May activate cdk-5. The polypeptide is Cyclin-Y (Caenorhabditis elegans).